A 1421-amino-acid polypeptide reads, in one-letter code: Envelopment polyprotein (1421 aa).

The signal sequence occupies residues 1 to 20 (MEGSYWWLSLLALLAWGANG). The Lumenal portion of the chain corresponds to 21 to 479 (ESTSPAETSP…CRMSHRPRTC (459 aa)). The span at 22-31 (STSPAETSPA) shows a compositional bias: low complexity. The interval 22-42 (STSPAETSPAPTTPNPPVVNP) is disordered. N97 and N346 each carry an N-linked (GlcNAc...) asparagine; by host glycan. A helical membrane pass occupies residues 480 to 500 (LALFIWLGAGYGITCIAGYMV). The Cytoplasmic segment spans residues 501–610 (YYAILALSML…KLGTLLKRLS (110 aa)). Residues 611–631 (WVTVFLCLFLTAIAPVQGQVT) traverse the membrane as a helical segment. Topologically, residues 632–643 (TSPVLPSNQSTE) are lumenal. N-linked (GlcNAc...) asparagine; by host glycosylation occurs at N639. The helical transmembrane segment at 644–664 (CTLLPPPVFLIFSAVLMSKTL) threads the bilayer. The Cytoplasmic portion of the chain corresponds to 665–708 (KRMGPVNKVGAAGHSARRTNSPKNLYKSKQIANTKSGPREPRRR). Residues 709–729 (VVVKALLILTASSALQSIHLA) traverse the membrane as a helical segment. A propeptide spanning residues 722-776 (ALQSIHLAQAFDSGSLPEGAWEEEMQLVQGCNQECSLEEDECSCPDGQSMTRKLL) is cleaved from the precursor. Residues 730–1330 (QAFDSGSLPE…GSFFRNYLGS (601 aa)) are Lumenal-facing. Disulfide bonds link C901–C1096 and C929–C934. N-linked (GlcNAc...) asparagine; by host glycans are attached at residues N1081 and N1299. Residues 1331–1351 (ITLGIVLTLLPVAVVLLFFCY) form a helical membrane-spanning segment. Topologically, residues 1352-1421 (GDKLFKLCSC…GKGKNYKELV (70 aa)) are cytoplasmic.

Belongs to the nairovirus envelope glycoprotein family. As to quaternary structure, heterodimer with glycoprotein C; in prefusion state. In terms of assembly, heterodimer with glycoprotein N; in prefusion state. Homotrimeric; in postfusion state. In terms of processing, specific enzymatic cleavage by host MBTPS1/S1P/SKI-1 endopeptidase yield glycoprotein N. Specific enzymatic cleavages by host furin-like protease and MBTPS1/S1P endopeptidase yield GP38. Post-translationally, glycosylated.

Its subcellular location is the host endoplasmic reticulum membrane. It localises to the virion membrane. The protein localises to the host Golgi apparatus membrane. In terms of biological role, glycoprotein N and glycoprotein C interact with each other and are present at the surface of the virion. Glycoprotein N probably locks the Gn-Gc complex in a prefusion state. Glycoprotein N and glycoprotein C are able to attach the virion to host cell receptors. This attachment induces virion internalization predominantly through clathrin-dependent endocytosis. Its function is as follows. Glycoprotein C and glycoprotein N interact with each other and are present at the surface of the virion. The spikes at the surface of the virion are formed by an N-terminal extension of glycoprotein C. Glycoprotein N and glycoprotein C are able to attach the virion to host cell receptors. This attachment induces virion internalization predominantly through clathrin-dependent endocytosis. Class II fusion protein that promotes fusion of viral membrane with host endosomal membrane after endocytosis of the virion. Exposure to potassium is necessary for the conformational change leading to fusion. The sequence is that of Envelopment polyprotein (GP) from Ixodes.